A 150-amino-acid polypeptide reads, in one-letter code: 3-dehydroquinate dehydratase (150 aa).

Tyr-23 functions as the Proton acceptor in the catalytic mechanism. Substrate-binding residues include Asn-79, His-85, and Asp-92. The Proton donor role is filled by His-105. Residues 106 to 107 (IS) and Arg-116 contribute to the substrate site.

This sequence belongs to the type-II 3-dehydroquinase family. Homododecamer.

The catalysed reaction is 3-dehydroquinate = 3-dehydroshikimate + H2O. It functions in the pathway metabolic intermediate biosynthesis; chorismate biosynthesis; chorismate from D-erythrose 4-phosphate and phosphoenolpyruvate: step 3/7. In terms of biological role, catalyzes a trans-dehydration via an enolate intermediate. In Marinomonas sp. (strain MWYL1), this protein is 3-dehydroquinate dehydratase.